Here is a 125-residue protein sequence, read N- to C-terminus: Large ribosomal subunit protein bL19 (125 aa).

Belongs to the bacterial ribosomal protein bL19 family.

In terms of biological role, this protein is located at the 30S-50S ribosomal subunit interface and may play a role in the structure and function of the aminoacyl-tRNA binding site. In Wolbachia pipientis wMel, this protein is Large ribosomal subunit protein bL19.